The sequence spans 217 residues: Adenylate kinase (217 aa).

Residue 10–15 coordinates ATP; it reads GAGKGT. Positions 30–59 are NMP; that stretch reads STGDILRAAVSEMTPMGVKAKGYMESGALV. Residues Thr31, Arg36, 57–59, 85–88, and Gln92 contribute to the AMP site; these read ALV and GFPR. An LID region spans residues 126–163; the sequence is GRRTCRLCGKGYHVVFDPPRVSGRCDECLGELFQRDDD. An ATP-binding site is contributed by Arg127. 4 residues coordinate Zn(2+): Cys130, Cys133, Cys150, and Cys153. Positions 160 and 171 each coordinate AMP. Gly199 provides a ligand contact to ATP.

The protein belongs to the adenylate kinase family. As to quaternary structure, monomer.

The protein resides in the cytoplasm. The enzyme catalyses AMP + ATP = 2 ADP. It participates in purine metabolism; AMP biosynthesis via salvage pathway; AMP from ADP: step 1/1. Catalyzes the reversible transfer of the terminal phosphate group between ATP and AMP. Plays an important role in cellular energy homeostasis and in adenine nucleotide metabolism. The polypeptide is Adenylate kinase (Geotalea uraniireducens (strain Rf4) (Geobacter uraniireducens)).